The chain runs to 1442 residues: Death-associated protein kinase 1 (1442 aa).

The 263-residue stretch at 13 to 275 (YDTGEELGSG…IQDSLQHPWI (263 aa)) folds into the Protein kinase domain. Residues 19–27 (LGSGQFAVV) and K42 contribute to the ATP site. The Proton acceptor role is filled by D139. The calmodulin-binding stretch occupies residues 267–334 (QDSLQHPWIK…RSNMSVARSD (68 aa)). S289 is subject to Phosphoserine; by RPS6KA1 and RPS6KA3. The segment at 292-301 (NMEKFKKFAA) is autoinhibitory domain. S308 carries the post-translational modification Phosphoserine; by autocatalysis. Residues S319 and S333 each carry the phosphoserine modification. 8 ANK repeats span residues 378-407 (HGTP…RIDV), 411-440 (GGSN…PLDV), 444-473 (SGET…NPDF), 477-506 (EEET…NVNI), 510-539 (EGET…DLNA), 543-572 (DGHI…FVDF), 576-605 (HGNT…NLDI), and 609-638 (YGRT…NVEA). Residues 681-955 (TQNLQPRIKL…NHLQEIRSQI (275 aa)) form the Roc domain. S734 bears the Phosphoserine; by MAPK1 mark. An ANK 9 repeat occupies 875-904 (KLKNPLRVVLVATHADIMNIPRPAGGEFGY). At S1115 the chain carries Phosphoserine. The stretch at 1164–1196 (DADIRLWVSGCRIANRGAELLVLLVNHGQGIEV) is one ANK 10 repeat. A Death domain is found at 1312-1396 (KLSRLLDPPD…DAADFLLKAS (85 aa)). S1433 is subject to Phosphoserine.

It belongs to the protein kinase superfamily. CAMK Ser/Thr protein kinase family. DAP kinase subfamily. As to quaternary structure, interacts with KLHL20. Interacts (via death domain) with MAPK1 and MAPK3. Interacts with MAP1B (via N-terminus). Interacts with PRKD1 in an oxidative stress-regulated manner. Interacts with PIN1, PDCD6, BECN1, TSC2 and STX1A. Interacts (via kinase domain) with DAPK3 (via kinase domain). Interacts with GRINB. Interacts (via death domain) with UNC5B (via death domain). Interacts with UNC5C (via death domain). Mg(2+) serves as cofactor. Post-translationally, ubiquitinated by the BCR(KLHL20) E3 ubiquitin ligase complex, leading to its degradation by the proteasome. In terms of processing, in response to mitogenic stimulation (PMA or EGF), phosphorylated at Ser-289; phosphorylation suppresses DAPK1 pro-apoptotic function. Autophosphorylation at Ser-308 inhibits its catalytic activity. Phosphorylation at Ser-734 by MAPK1 increases its catalytic activity and promotes cytoplasmic retention of MAPK1. Endoplasmic-stress can cause dephosphorylation at Ser-308. In terms of tissue distribution, high levels in bladder, uterus, vas deferens, lung, liver and kidney.

The enzyme catalyses L-seryl-[protein] + ATP = O-phospho-L-seryl-[protein] + ADP + H(+). It catalyses the reaction L-threonyl-[protein] + ATP = O-phospho-L-threonyl-[protein] + ADP + H(+). Its activity is regulated as follows. Activated by Ca(2+)/calmodulin. Regulated by a locking mechanism, involving autophosphorylation at Ser-308 and calmodulin binding. In the inactive state, Ser-308 is phosphorylated. Activation involves its dephosphorylation and a release-of-autoinhibition mechanism where binding of calmodulin induces a conformational change that relieves the steric block of the active site by the autoinhibitory domain. Activity is modulated by UNC5B and NTN1. UNC5B activates it by inhibiting the phosphorylation at Ser-308, whereas NTN1 inhibits UNC5B-mediated activation of DAPK1. Endoplasmic-stress activates by causing Ser-308 dephosphorylation. Functionally, calcium/calmodulin-dependent serine/threonine kinase involved in multiple cellular signaling pathways that trigger cell survival, apoptosis, and autophagy. Regulates both type I apoptotic and type II autophagic cell deaths signal, depending on the cellular setting. The former is caspase-dependent, while the latter is caspase-independent and is characterized by the accumulation of autophagic vesicles. Phosphorylates PIN1 resulting in inhibition of its catalytic activity, nuclear localization, and cellular function. Phosphorylates TPM1, enhancing stress fiber formation in endothelial cells. Phosphorylates STX1A and significantly decreases its binding to STXBP1. Phosphorylates PRKD1 and regulates JNK signaling by binding and activating PRKD1 under oxidative stress. Phosphorylates BECN1, reducing its interaction with BCL2 and BCL2L1 and promoting the induction of autophagy. Phosphorylates TSC2, disrupting the TSC1-TSC2 complex and stimulating mTORC1 activity in a growth factor-dependent pathway. Phosphorylates RPS6, MYL9 and DAPK3. Acts as a signaling amplifier of NMDA receptors at extrasynaptic sites for mediating brain damage in stroke. Cerebral ischemia recruits DAPK1 into the NMDA receptor complex and it phosphorylates GRINB at Ser-1303 inducing injurious Ca(2+) influx through NMDA receptor channels, resulting in an irreversible neuronal death. Required together with DAPK3 for phosphorylation of RPL13A upon interferon-gamma activation which is causing RPL13A involvement in transcript-selective translation inhibition. The protein is Death-associated protein kinase 1 (Dapk1) of Mus musculus (Mouse).